We begin with the raw amino-acid sequence, 600 residues long: DNA primase (600 aa).

The segment at 38-62 (CPFHDEKTPSFIVYPTRGHYHCYGC) adopts a CHC2-type zinc-finger fold. One can recognise a Toprim domain in the interval 253-333 (KRVILVEGQA…GIAVIVCRLP (81 aa)). The Mg(2+) site is built by Glu259, Asp304, and Asp306.

It belongs to the DnaG primase family. In terms of assembly, monomer. Interacts with DnaB. The cofactor is Zn(2+). Requires Mg(2+) as cofactor.

It catalyses the reaction ssDNA + n NTP = ssDNA/pppN(pN)n-1 hybrid + (n-1) diphosphate.. In terms of biological role, RNA polymerase that catalyzes the synthesis of short RNA molecules used as primers for DNA polymerase during DNA replication. In Chlamydia muridarum (strain MoPn / Nigg), this protein is DNA primase.